The following is a 156-amino-acid chain: Small ribosomal subunit protein uS7 (156 aa).

It belongs to the universal ribosomal protein uS7 family. As to quaternary structure, part of the 30S ribosomal subunit. Contacts proteins S9 and S11.

Its function is as follows. One of the primary rRNA binding proteins, it binds directly to 16S rRNA where it nucleates assembly of the head domain of the 30S subunit. Is located at the subunit interface close to the decoding center, probably blocks exit of the E-site tRNA. The sequence is that of Small ribosomal subunit protein uS7 from Mesorhizobium japonicum (strain LMG 29417 / CECT 9101 / MAFF 303099) (Mesorhizobium loti (strain MAFF 303099)).